The primary structure comprises 574 residues: Putative ABC transporter ATP-binding protein VVA0347 (574 aa).

ABC transporter domains lie at 3 to 244 (IEFS…GIRE) and 299 to 533 (LDVR…ANLT). ATP contacts are provided by residues 37–44 (GPSGSGKS) and 332–339 (GKNGSGKS).

Belongs to the ABC transporter superfamily.

It is found in the cell inner membrane. Its function is as follows. Probably part of an ABC transporter complex. Responsible for energy coupling to the transport system. The chain is Putative ABC transporter ATP-binding protein VVA0347 from Vibrio vulnificus (strain YJ016).